A 476-amino-acid chain; its full sequence is Glutamate mutase epsilon subunit (476 aa).

Residue Arg-62 participates in L-glutamate binding. Gly-64 provides a ligand contact to adenosylcob(III)alamin. Arg-96 contributes to the L-glutamate binding site. Asn-119 contacts adenosylcob(III)alamin. L-glutamate-binding positions include 145–146 (RH), Glu-167, and Tyr-173. Pro-176 contributes to the adenosylcob(III)alamin binding site. Residue Tyr-177 coordinates L-glutamate. Adenosylcob(III)alamin is bound by residues Phe-289, Lys-318, and Glu-322.

It belongs to the methylaspartate mutase GlmE subunit family. As to quaternary structure, heterotetramer composed of 2 epsilon subunits (GlmE) and 2 sigma subunits (GlmS). GlmE exists as a homodimer and GlmS as a monomer. The cofactor is adenosylcob(III)alamin.

It catalyses the reaction (2S,3S)-3-methyl-L-aspartate = L-glutamate. Its pathway is amino-acid degradation; L-glutamate degradation via mesaconate pathway; acetate and pyruvate from L-glutamate: step 1/4. Functionally, catalyzes the carbon skeleton rearrangement of L-glutamate to L-threo-3-methylaspartate ((2S,3S)-3-methylaspartate). The sequence is that of Glutamate mutase epsilon subunit from Halobacterium salinarum (strain ATCC 700922 / JCM 11081 / NRC-1) (Halobacterium halobium).